Consider the following 423-residue polypeptide: tRNA(Ile)-lysidine synthase (423 aa).

Residue 29 to 34 (SGGKDS) coordinates ATP.

The protein belongs to the tRNA(Ile)-lysidine synthase family.

The protein resides in the cytoplasm. The catalysed reaction is cytidine(34) in tRNA(Ile2) + L-lysine + ATP = lysidine(34) in tRNA(Ile2) + AMP + diphosphate + H(+). In terms of biological role, ligates lysine onto the cytidine present at position 34 of the AUA codon-specific tRNA(Ile) that contains the anticodon CAU, in an ATP-dependent manner. Cytidine is converted to lysidine, thus changing the amino acid specificity of the tRNA from methionine to isoleucine. This is tRNA(Ile)-lysidine synthase from Lactococcus lactis subsp. lactis (strain IL1403) (Streptococcus lactis).